Here is a 236-residue protein sequence, read N- to C-terminus: UPF0173 metal-dependent hydrolase Mnod_3315 (236 aa).

This sequence belongs to the UPF0173 family.

The sequence is that of UPF0173 metal-dependent hydrolase Mnod_3315 from Methylobacterium nodulans (strain LMG 21967 / CNCM I-2342 / ORS 2060).